Here is a 488-residue protein sequence, read N- to C-terminus: Aerolysin (488 aa).

Positions 1–24 (MMNRIITANLAFLASSLMLAQVQA) are cleaved as a signal peptide. Disulfide bonds link cysteine 43/cysteine 99 and cysteine 183/cysteine 188. Residues 69-85 (WQITGLADRWVIMGPGY) are interaction with host N-linked glycan. Positions 256–288 (YSLSEKVTTKNKFQWPLVGETELAIEIAASQSW) are part of the transmembrane beta-barrel after proteolytic activation of the toxin and insertion into the host membrane. The segment at 346–355 (RWGGNAWYTH) is interaction with glycans from host GPI-anchor. Residues 444–488 (TRSAKAAQLRSASAEEVALTSVDLDSEALANEGFGNVSLTIVPVQ) constitute a propeptide that is removed on maturation.

This sequence belongs to the aerolysin family. Homodimer in solution; homoheptamer in the host membrane. After binding to GPI-anchored proteins in target membranes and proteolytic removal of the C-terminal propeptide, the protein assembles into a heptameric pre-pore complex. A further conformation change leads to insertion into the host membrane. In terms of processing, proteolytic cleavage and subsequent release of the propeptide trigger a major conformation change, leading to the formation of a heptameric pre-pore that then inserts into the host membrane.

The protein resides in the secreted. It localises to the host cell membrane. Its function is as follows. Secreted, cytolytic toxin that forms pores in host membranes after proteolytic removal of a C-terminal propeptide, leading to destruction of the membrane permeability barrier and cell death. The pores are formed by transmembrane beta-strands and are approximately 3 nm in diameter. The protein is Aerolysin (asa1) of Aeromonas sobria.